Reading from the N-terminus, the 416-residue chain is CinA-like protein (416 aa).

This sequence belongs to the CinA family.

This Trichormus variabilis (strain ATCC 29413 / PCC 7937) (Anabaena variabilis) protein is CinA-like protein.